The sequence spans 95 residues: Aspartyl/glutamyl-tRNA(Asn/Gln) amidotransferase subunit C (95 aa).

The span at 55 to 67 (ALERRNVTREDQV) shows a compositional bias: basic and acidic residues. The tract at residues 55 to 83 (ALERRNVTREDQVHNSLTNDKALENAPET) is disordered.

This sequence belongs to the GatC family. As to quaternary structure, heterotrimer of A, B and C subunits.

The enzyme catalyses L-glutamyl-tRNA(Gln) + L-glutamine + ATP + H2O = L-glutaminyl-tRNA(Gln) + L-glutamate + ADP + phosphate + H(+). It catalyses the reaction L-aspartyl-tRNA(Asn) + L-glutamine + ATP + H2O = L-asparaginyl-tRNA(Asn) + L-glutamate + ADP + phosphate + 2 H(+). Allows the formation of correctly charged Asn-tRNA(Asn) or Gln-tRNA(Gln) through the transamidation of misacylated Asp-tRNA(Asn) or Glu-tRNA(Gln) in organisms which lack either or both of asparaginyl-tRNA or glutaminyl-tRNA synthetases. The reaction takes place in the presence of glutamine and ATP through an activated phospho-Asp-tRNA(Asn) or phospho-Glu-tRNA(Gln). The protein is Aspartyl/glutamyl-tRNA(Asn/Gln) amidotransferase subunit C of Natranaerobius thermophilus (strain ATCC BAA-1301 / DSM 18059 / JW/NM-WN-LF).